The primary structure comprises 21 residues: Hemocyanin subunit 1 (21 aa).

It belongs to the tyrosinase family. Hemocyanin subfamily. Hemolymph.

Its subcellular location is the secreted. The protein localises to the extracellular space. In terms of biological role, hemocyanins are copper-containing oxygen carriers occurring freely dissolved in the hemolymph of many mollusks and arthropods. The protein is Hemocyanin subunit 1 of Maja squinado (Mediterranean spider crab).